Here is a 346-residue protein sequence, read N- to C-terminus: UDP-3-O-acylglucosamine N-acyltransferase (346 aa).

H253 acts as the Proton acceptor in catalysis.

It belongs to the transferase hexapeptide repeat family. LpxD subfamily. In terms of assembly, homotrimer.

It carries out the reaction a UDP-3-O-[(3R)-3-hydroxyacyl]-alpha-D-glucosamine + a (3R)-hydroxyacyl-[ACP] = a UDP-2-N,3-O-bis[(3R)-3-hydroxyacyl]-alpha-D-glucosamine + holo-[ACP] + H(+). It functions in the pathway bacterial outer membrane biogenesis; LPS lipid A biosynthesis. Functionally, catalyzes the N-acylation of UDP-3-O-acylglucosamine using 3-hydroxyacyl-ACP as the acyl donor. Is involved in the biosynthesis of lipid A, a phosphorylated glycolipid that anchors the lipopolysaccharide to the outer membrane of the cell. In Rickettsia conorii (strain ATCC VR-613 / Malish 7), this protein is UDP-3-O-acylglucosamine N-acyltransferase.